Here is a 215-residue protein sequence, read N- to C-terminus: Proteasome subunit beta (215 aa).

The propeptide at 1–12 is removed in mature form; by autocatalysis; the sequence is MLGEIQDKVYKG. Thr-13 acts as the Nucleophile in catalysis.

This sequence belongs to the peptidase T1B family. As to quaternary structure, the 20S proteasome core is composed of 14 alpha and 14 beta subunits that assemble into four stacked heptameric rings, resulting in a barrel-shaped structure. The two inner rings, each composed of seven catalytic beta subunits, are sandwiched by two outer rings, each composed of seven alpha subunits. The catalytic chamber with the active sites is on the inside of the barrel. Has a gated structure, the ends of the cylinder being occluded by the N-termini of the alpha-subunits. Is capped at one or both ends by the proteasome regulatory ATPase, PAN.

The protein resides in the cytoplasm. It carries out the reaction Cleavage of peptide bonds with very broad specificity.. With respect to regulation, the formation of the proteasomal ATPase PAN-20S proteasome complex, via the docking of the C-termini of PAN into the intersubunit pockets in the alpha-rings, triggers opening of the gate for substrate entry. Interconversion between the open-gate and close-gate conformations leads to a dynamic regulation of the 20S proteasome proteolysis activity. Its function is as follows. Component of the proteasome core, a large protease complex with broad specificity involved in protein degradation. The protein is Proteasome subunit beta of Archaeoglobus profundus (strain DSM 5631 / JCM 9629 / NBRC 100127 / Av18).